The chain runs to 381 residues: Phosphatidyl-myo-inositol mannosyltransferase (381 aa).

GDP-alpha-D-mannose-binding residues include Tyr-9 and Gly-16. A 1,2-diacyl-sn-glycero-3-phospho-(1D-myo-inositol) contacts are provided by residues Gln-18, 69-70, and Arg-75; that span reads FN. GDP-alpha-D-mannose contacts are provided by residues Arg-204, 209 to 210, 251 to 253, Arg-256, 274 to 278, and Glu-282; these read RK, LDD, and ESFGI.

The protein belongs to the glycosyltransferase group 1 family. Glycosyltransferase 4 subfamily. Monomer. It depends on Mg(2+) as a cofactor.

The protein resides in the cell membrane. The enzyme catalyses a 1,2-diacyl-sn-glycero-3-phospho-(1D-myo-inositol) + GDP-alpha-D-mannose = a 1,2-diacyl-sn-glycero-3-phospho-[alpha-D-mannopyranosyl-(1&lt;-&gt;6)-D-myo-inositol] + GDP + H(+). It participates in phospholipid metabolism; phosphatidylinositol metabolism. Its function is as follows. Involved in the biosynthesis of phosphatidyl-myo-inositol mannosides (PIM) which are early precursors in the biosynthesis of lipomannans (LM) and lipoarabinomannans (LAM). Catalyzes the addition of a mannosyl residue from GDP-D-mannose (GDP-Man) to the position 2 of the carrier lipid phosphatidyl-myo-inositol (PI) to generate a phosphatidyl-myo-inositol bearing an alpha-1,2-linked mannose residue (PIM1). The chain is Phosphatidyl-myo-inositol mannosyltransferase from Propionibacterium freudenreichii subsp. shermanii (strain ATCC 9614 / DSM 4902 / CIP 103027 / NCIMB 8099 / CIRM-BIA1).